We begin with the raw amino-acid sequence, 300 residues long: Enoyl-CoA hydratase domain-containing protein 3, mitochondrial (300 aa).

The transit peptide at 1 to 66 (MALVAGLRAF…RNIVLSNPRR (66 aa)) directs the protein to the mitochondrion. Positions 32–54 (SPGSARPAGPESEPRLTSTRQQD) are disordered. Lys-110 carries the post-translational modification N6-succinyllysine.

This sequence belongs to the enoyl-CoA hydratase/isomerase family.

It localises to the mitochondrion. Functionally, may play a role in fatty acid biosynthesis and insulin sensitivity. The chain is Enoyl-CoA hydratase domain-containing protein 3, mitochondrial from Rattus norvegicus (Rat).